A 391-amino-acid chain; its full sequence is Phosphoglycerate kinase (391 aa).

Residues 21-23, arginine 36, 59-62, arginine 113, and arginine 146 contribute to the substrate site; these read DLN and HLGR. ATP-binding positions include lysine 197, glutamate 319, and 345–348; that span reads GGDT.

Belongs to the phosphoglycerate kinase family. Monomer.

It is found in the cytoplasm. The enzyme catalyses (2R)-3-phosphoglycerate + ATP = (2R)-3-phospho-glyceroyl phosphate + ADP. The protein operates within carbohydrate degradation; glycolysis; pyruvate from D-glyceraldehyde 3-phosphate: step 2/5. In Shewanella frigidimarina (strain NCIMB 400), this protein is Phosphoglycerate kinase.